The sequence spans 499 residues: Putative protein phosphatase 2C 76 (499 aa).

Positions M1 to G34 are cleaved as a signal peptide. The tract at residues A67–R101 is disordered. Residues G92 to L457 enclose the PPM-type phosphatase domain. Residues D138 and G139 each contribute to the Mn(2+) site. A disordered region spans residues K286–D306. The Mn(2+) site is built by D397 and D448.

This sequence belongs to the PP2C family. Requires Mg(2+) as cofactor. The cofactor is Mn(2+).

It carries out the reaction O-phospho-L-seryl-[protein] + H2O = L-seryl-[protein] + phosphate. It catalyses the reaction O-phospho-L-threonyl-[protein] + H2O = L-threonyl-[protein] + phosphate. The protein is Putative protein phosphatase 2C 76 of Oryza sativa subsp. japonica (Rice).